Here is an 87-residue protein sequence, read N- to C-terminus: Acyl-CoA-binding protein (87 aa).

Residues 3-87 (LKEEFEEHAV…KVKQLLEESA (85 aa)) enclose the ACB domain. An acyl-CoA-binding positions include 30-34 (YGLYK), K56, and Y75.

The protein belongs to the ACBP family.

Functionally, binds medium- and long-chain acyl-CoA esters with very high affinity and may function as an intracellular carrier of acyl-CoA esters. The chain is Acyl-CoA-binding protein (ACABP) from Fritillaria agrestis (Stinkbells).